The primary structure comprises 62 residues: Translational regulator CsrA (62 aa).

The protein belongs to the CsrA/RsmA family. Homodimer; the beta-strands of each monomer intercalate to form a hydrophobic core, while the alpha-helices form wings that extend away from the core.

The protein localises to the cytoplasm. In terms of biological role, a key translational regulator that binds mRNA to regulate translation initiation and/or mRNA stability. Mediates global changes in gene expression, shifting from rapid growth to stress survival by linking envelope stress, the stringent response and the catabolite repression systems. Usually binds in the 5'-UTR; binding at or near the Shine-Dalgarno sequence prevents ribosome-binding, repressing translation, binding elsewhere in the 5'-UTR can activate translation and/or stabilize the mRNA. Its function is antagonized by small RNA(s). The chain is Translational regulator CsrA from Pasteurella multocida (strain Pm70).